The following is a 603-amino-acid chain: Prostaglandin G/H synthase 1 (603 aa).

Residues 1–27 (MSRGSRLHRWPLLLLLLLLLPPPPVLP) form the signal peptide. Residues 35-73 (PVNPCCYYPCQHQGICVRFGLDRYQCDCTRTGYSGPNCT) enclose the EGF-like domain. Intrachain disulfides connect Cys-39–Cys-50, Cys-40–Cys-162, Cys-44–Cys-60, and Cys-62–Cys-72. Residues Asn-71, Asn-107, and Asn-147 are each glycosylated (N-linked (GlcNAc...) asparagine). His-210 acts as the Proton acceptor in catalysis. The For cyclooxygenase activity role is filled by Tyr-388. His-391 serves as a coordination point for heme b. A disulfide bridge connects residues Cys-572 and Cys-578.

The protein belongs to the prostaglandin G/H synthase family. In terms of assembly, homodimer. The cofactor is heme b. N-glycosylated. N-linked glycosylation is necessary for enzymatic activity. Brain cortex. Isoform 2 is expressed in the cerebral cortex and heart.

The protein localises to the microsome membrane. The protein resides in the endoplasmic reticulum membrane. The catalysed reaction is (5Z,8Z,11Z,14Z)-eicosatetraenoate + AH2 + 2 O2 = prostaglandin H2 + A + H2O. It carries out the reaction (5Z,8Z,11Z,14Z)-eicosatetraenoate + 2 O2 = prostaglandin G2. The enzyme catalyses prostaglandin G2 + AH2 = prostaglandin H2 + A + H2O. It catalyses the reaction (9Z,12Z)-octadecadienoate + AH2 + O2 = (9R)-hydroxy-(10E,12Z)-octadecadienoate + A + H2O. The catalysed reaction is (9Z,12Z)-octadecadienoate + AH2 + O2 = (9S)-hydroxy-(10E,12Z)-octadecadienoate + A + H2O. It carries out the reaction (9Z,12Z)-octadecadienoate + AH2 + O2 = (13S)-hydroxy-(9Z,11E)-octadecadienoate + A + H2O. The enzyme catalyses (9Z,12Z)-octadecadienoate + AH2 + O2 = (13R)-hydroxy-(9Z,11E)-octadecadienoate + A + H2O. It functions in the pathway lipid metabolism; prostaglandin biosynthesis. Its activity is regulated as follows. The cyclooxygenase activity is inhibited by nonsteroidal anti-inflammatory drugs (NSAIDs) including ibuprofen, flurbiprofen, ketoprofen, naproxen, flurbiprofen, anirolac, fenclofenac and diclofenac. Dual cyclooxygenase and peroxidase that plays an important role in the biosynthesis pathway of prostanoids, a class of C20 oxylipins mainly derived from arachidonate ((5Z,8Z,11Z,14Z)-eicosatetraenoate, AA, C20:4(n-6)), with a particular role in the inflammatory response. The cyclooxygenase activity oxygenates AA to the hydroperoxy endoperoxide prostaglandin G2 (PGG2), and the peroxidase activity reduces PGG2 to the hydroxy endoperoxide prostaglandin H2 (PGH2), the precursor of all 2-series prostaglandins and thromboxanes. This complex transformation is initiated by abstraction of hydrogen at carbon 13 (with S-stereochemistry), followed by insertion of molecular O2 to form the endoperoxide bridge between carbon 9 and 11 that defines prostaglandins. The insertion of a second molecule of O2 (bis-oxygenase activity) yields a hydroperoxy group in PGG2 that is then reduced to PGH2 by two electrons. Involved in the constitutive production of prostanoids in particular in the stomach and platelets. In gastric epithelial cells, it is a key step in the generation of prostaglandins, such as prostaglandin E2 (PGE2), which plays an important role in cytoprotection. In platelets, it is involved in the generation of thromboxane A2 (TXA2), which promotes platelet activation and aggregation, vasoconstriction and proliferation of vascular smooth muscle cells. Can also use linoleate (LA, (9Z,12Z)-octadecadienoate, C18:2(n-6)) as substrate and produce hydroxyoctadecadienoates (HODEs) in a regio- and stereospecific manner, being (9R)-HODE ((9R)-hydroxy-(10E,12Z)-octadecadienoate) and (13S)-HODE ((13S)-hydroxy-(9Z,11E)-octadecadienoate) its major products. The protein is Prostaglandin G/H synthase 1 (PTGS1) of Canis lupus familiaris (Dog).